The following is a 146-amino-acid chain: Large ribosomal subunit protein uL15 (146 aa).

Residues 1 to 13 (MKLHELKPSEGSR) show a composition bias toward basic and acidic residues. The interval 1–57 (MKLHELKPSEGSRKTRNRVGRGIGSGNGKTAGKGHKGQNARSGGGVRPGFEGGQMPL) is disordered. 2 stretches are compositionally biased toward gly residues: residues 21–31 (RGIGSGNGKTA) and 42–52 (SGGGVRPGFEG).

Belongs to the universal ribosomal protein uL15 family. As to quaternary structure, part of the 50S ribosomal subunit.

In terms of biological role, binds to the 23S rRNA. The chain is Large ribosomal subunit protein uL15 from Bacillus subtilis (strain 168).